The sequence spans 246 residues: Probable transcriptional regulatory protein Pden_1905 (246 aa).

The interval 1–21 is disordered; the sequence is MAGHSKWANIQHRKGKQDKLR.

It belongs to the TACO1 family.

The protein resides in the cytoplasm. This is Probable transcriptional regulatory protein Pden_1905 from Paracoccus denitrificans (strain Pd 1222).